A 586-amino-acid chain; its full sequence is Ezrin (586 aa).

Residues 2-295 (PKPINVRVTT…GNHELYMRRR (294 aa)) enclose the FERM domain. An N6-acetyllysine modification is found at Lys60. Positions 115–120 (IYCPPE) match the [IL]-x-C-x-x-[DE] motif motif. Tyr146 carries the phosphotyrosine; by PDGFR modification. The interaction with SCYL3 stretch occupies residues 244-586 (EIRNISFNDK…KQRIDEFEAM (343 aa)). The stretch at 302 to 462 (VQQMKAQARE…QDDLVKTKEE (161 aa)) forms a coiled coil. A disordered region spans residues 306 to 338 (KAQAREEKHQKQLERQQLETEKKRRETVEREKE). Basic and acidic residues predominate over residues 308–338 (QAREEKHQKQLERQQLETEKKRRETVEREKE). Ser366 is modified (phosphoserine). The residue at position 478 (Tyr478) is a Phosphotyrosine. Ser535 bears the Phosphoserine mark. Position 567 is a phosphothreonine; by ROCK2 and PKC/PRKCI (Thr567).

Interacts with PODXL and NHERF2. Found in a complex with EZR, PODXL and NHERF2. Interacts with PALS1. Interacts with MCC, PLEKHG6, SCYL3/PACE1, NHERF1 and TMEM8B. Interacts (when phosphorylated) with FES/FPS. Interacts with dimeric S100P, the interaction may be activating through unmasking of F-actin binding sites. Identified in complexes that contain VIM, EZR, AHNAK, BFSP1, BFSP2, ANK2, PLEC, PRX and spectrin. Detected in a complex composed of at least EZR, AHNAK, PPL and PRX. Interacts with PDPN (via cytoplasmic domain); activates RHOA and promotes epithelial-mesenchymal transition. Interacts with SPN/CD43 cytoplasmic tail, CD44 and ICAM2. Interacts with SLC9A3; interaction targets SLC9A3 to the apical membrane. Interacts with SLC9A1; regulates interactions of SLC9A1 with cytoskeletal and promotes stress fiber formation. Interacts with CLIC5; may work together in a complex which also includes RDX and MYO6 to stabilize linkages between the plasma membrane and subjacent actin cytoskeleton at the base of stereocilia. Phosphorylated by tyrosine-protein kinases. Phosphorylation by ROCK2 suppresses the head-to-tail association of the N-terminal and C-terminal halves resulting in an opened conformation which is capable of actin and membrane-binding. Post-translationally, S-nitrosylation is induced by interferon-gamma and oxidatively-modified low-densitity lipoprotein (LDL(ox)) possibly implicating the iNOS-S100A8/9 transnitrosylase complex. Glomerular epithelium cell (podocyte). Expressed in cerebrum, cerebellum and hippocampus (at protein level). Expressed in the small intestine, lung, kidney and ovaries.

The protein localises to the apical cell membrane. The protein resides in the cell projection. Its subcellular location is the microvillus membrane. It is found in the ruffle membrane. It localises to the cytoplasm. The protein localises to the cell cortex. The protein resides in the cytoskeleton. Its subcellular location is the microvillus. A head-to-tail association, of the N-terminal and C-terminal halves results in a closed conformation (inactive form) which is incapable of actin or membrane-binding. Probably involved in connections of major cytoskeletal structures to the plasma membrane. In epithelial cells, required for the formation of microvilli and membrane ruffles on the apical pole. Along with PLEKHG6, required for normal macropinocytosis. The sequence is that of Ezrin (Ezr) from Rattus norvegicus (Rat).